The primary structure comprises 279 residues: D-aminoacyl-tRNA deacylase (279 aa).

Residues 81 to 100 form a disordered region; sequence GRKSLTVHHPGNPTEDNSLG.

The protein belongs to the DtdA deacylase family. In terms of assembly, monomer. Requires Zn(2+) as cofactor.

The catalysed reaction is a D-aminoacyl-tRNA + H2O = a tRNA + a D-alpha-amino acid + H(+). The enzyme catalyses glycyl-tRNA(Ala) + H2O = tRNA(Ala) + glycine + H(+). D-aminoacyl-tRNA deacylase with broad substrate specificity. By recycling D-aminoacyl-tRNA to D-amino acids and free tRNA molecules, this enzyme counteracts the toxicity associated with the formation of D-aminoacyl-tRNA entities in vivo. This Aeropyrum pernix (strain ATCC 700893 / DSM 11879 / JCM 9820 / NBRC 100138 / K1) protein is D-aminoacyl-tRNA deacylase.